The sequence spans 349 residues: Phenylalanine--tRNA ligase alpha subunit (349 aa).

Glutamate 259 contacts Mg(2+).

It belongs to the class-II aminoacyl-tRNA synthetase family. Phe-tRNA synthetase alpha subunit type 1 subfamily. Tetramer of two alpha and two beta subunits. Mg(2+) is required as a cofactor.

It is found in the cytoplasm. It catalyses the reaction tRNA(Phe) + L-phenylalanine + ATP = L-phenylalanyl-tRNA(Phe) + AMP + diphosphate + H(+). The polypeptide is Phenylalanine--tRNA ligase alpha subunit (Lactobacillus helveticus (strain DPC 4571)).